We begin with the raw amino-acid sequence, 931 residues long: DNA mismatch repair protein MutS (931 aa).

Residues 1 to 10 (MMDDTAMPAR) are compositionally biased toward low complexity. Residues 1–34 (MMDDTAMPARAEADAAEDELAAPAGIDRTAKADK) are disordered. 674–681 (GPNMAGKS) is a binding site for ATP.

It belongs to the DNA mismatch repair MutS family.

In terms of biological role, this protein is involved in the repair of mismatches in DNA. It is possible that it carries out the mismatch recognition step. This protein has a weak ATPase activity. This Azorhizobium caulinodans (strain ATCC 43989 / DSM 5975 / JCM 20966 / LMG 6465 / NBRC 14845 / NCIMB 13405 / ORS 571) protein is DNA mismatch repair protein MutS.